A 130-amino-acid polypeptide reads, in one-letter code: Fluoride-specific ion channel FluC (130 aa).

Transmembrane regions (helical) follow at residues 3–23 (FVFL…YFVG), 39–59 (GTFS…HLAV), 67–87 (FGIF…SYGL), and 102–122 (VSYA…GWFL). 2 residues coordinate Na(+): G77 and T80.

It belongs to the fluoride channel Fluc/FEX (TC 1.A.43) family.

The protein localises to the cell inner membrane. The enzyme catalyses fluoride(in) = fluoride(out). Its activity is regulated as follows. Na(+) is not transported, but it plays an essential structural role and its presence is essential for fluoride channel function. Functionally, fluoride-specific ion channel. Important for reducing fluoride concentration in the cell, thus reducing its toxicity. In Helicobacter pylori (strain ATCC 700392 / 26695) (Campylobacter pylori), this protein is Fluoride-specific ion channel FluC.